The chain runs to 172 residues: C-phycocyanin beta subunit (172 aa).

Asparagine 72 carries the post-translational modification N4-methylasparagine. (2R,3E)-phycocyanobilin contacts are provided by cysteine 82 and cysteine 153.

The protein belongs to the phycobiliprotein family. As to quaternary structure, heterodimer of an alpha and a beta chain, which further assembles into trimers. The trimers assemble into hexamers, although these were not seen in the crystallographic studies. Part of 2 PBS rod complexes, the conventional CpcG-PBS rod and a photosystem I-specific CpcL-PBS rod, both of which include ferredoxin--NADP reductase (petH). Interacts with rod linker CpcC2 via the latter's N-terminal PBS-linker domain. In terms of processing, contains two covalently linked bilin chromophores.

The protein localises to the cellular thylakoid membrane. Light-harvesting photosynthetic bile pigment-protein from the phycobiliprotein complex (phycobilisome, PBS). Phycocyanin is the major phycobiliprotein in the PBS rod. The polypeptide is C-phycocyanin beta subunit (cpcB) (Synechocystis sp. (strain ATCC 27184 / PCC 6803 / Kazusa)).